The chain runs to 426 residues: Glutamate-1-semialdehyde 2,1-aminomutase (426 aa).

An N6-(pyridoxal phosphate)lysine modification is found at Lys265.

It belongs to the class-III pyridoxal-phosphate-dependent aminotransferase family. HemL subfamily. In terms of assembly, homodimer. Requires pyridoxal 5'-phosphate as cofactor.

It is found in the cytoplasm. The catalysed reaction is (S)-4-amino-5-oxopentanoate = 5-aminolevulinate. The protein operates within porphyrin-containing compound metabolism; protoporphyrin-IX biosynthesis; 5-aminolevulinate from L-glutamyl-tRNA(Glu): step 2/2. The polypeptide is Glutamate-1-semialdehyde 2,1-aminomutase (Klebsiella pneumoniae (strain 342)).